Here is a 196-residue protein sequence, read N- to C-terminus: GTP cyclohydrolase-2 (196 aa).

Position 49-53 (49-53 (RVHSE)) interacts with GTP. Zn(2+)-binding residues include Cys-54, Cys-65, and Cys-67. GTP contacts are provided by residues Gln-70, 92-94 (EGR), and Thr-114. Asp-126 functions as the Proton acceptor in the catalytic mechanism. Arg-128 (nucleophile) is an active-site residue. GTP-binding residues include Thr-149 and Lys-154.

This sequence belongs to the GTP cyclohydrolase II family. As to quaternary structure, homodimer. Zn(2+) serves as cofactor.

It catalyses the reaction GTP + 4 H2O = 2,5-diamino-6-hydroxy-4-(5-phosphoribosylamino)-pyrimidine + formate + 2 phosphate + 3 H(+). It functions in the pathway cofactor biosynthesis; riboflavin biosynthesis; 5-amino-6-(D-ribitylamino)uracil from GTP: step 1/4. In terms of biological role, catalyzes the conversion of GTP to 2,5-diamino-6-ribosylamino-4(3H)-pyrimidinone 5'-phosphate (DARP), formate and pyrophosphate. The chain is GTP cyclohydrolase-2 from Shigella boydii serotype 18 (strain CDC 3083-94 / BS512).